The primary structure comprises 585 residues: Archaeosine synthase (585 aa).

The PUA domain maps to 516-584 (TKTVEIDGFV…IGVEIRHVEE (69 aa)).

The protein belongs to the archaeosine synthase type 1 family. As to quaternary structure, homodimer.

The catalysed reaction is 7-cyano-7-carbaguanosine(15) in tRNA + L-glutamine + H2O = archaeosine(15) in tRNA + L-glutamate. Its pathway is tRNA modification; archaeosine-tRNA biosynthesis. Its function is as follows. Is responsible for the final step in the biosynthesis of archaeosine, a modified nucleoside present in the dihydrouridine loop (D-loop) of archaeal tRNA. Catalyzes the conversion of 7-cyano-7-deazaguanine (preQ0)-modified tRNA to archaeosine-tRNA, transforming a nitrile group to a formamidine group. This Haloferax volcanii (strain ATCC 29605 / DSM 3757 / JCM 8879 / NBRC 14742 / NCIMB 2012 / VKM B-1768 / DS2) (Halobacterium volcanii) protein is Archaeosine synthase.